Reading from the N-terminus, the 122-residue chain is Phospholipase A2 nigroviriditoxin basic subunit B (122 aa).

7 cysteine pairs are disulfide-bonded: cysteine 26/cysteine 115, cysteine 28/cysteine 44, cysteine 43/cysteine 95, cysteine 49/cysteine 122, cysteine 50/cysteine 88, cysteine 57/cysteine 81, and cysteine 75/cysteine 86. Positions 27, 29, and 31 each coordinate Ca(2+). Residue histidine 47 is part of the active site. Aspartate 48 lines the Ca(2+) pocket. The active site involves aspartate 89.

The protein belongs to the phospholipase A2 family. Group II subfamily. D49 sub-subfamily. In terms of assembly, nigroviriditoxin is a heterodimer of an acidic subunit A and a basic subunit B. The cofactor is Ca(2+). In terms of tissue distribution, expressed by the venom gland.

Its subcellular location is the secreted. The catalysed reaction is a 1,2-diacyl-sn-glycero-3-phosphocholine + H2O = a 1-acyl-sn-glycero-3-phosphocholine + a fatty acid + H(+). Functionally, heterodimer A-B: Nigroviriditoxin possesses phospholipase A2 (PLA2) activity. It consists of a non-covalent association of a basic PLA2 subunit B with a non-enzymatic subunit A. In terms of biological role, subunit B: Snake venom phospholipase A2 (PLA2) that induces myonecrosis in mice. PLA2 catalyzes the calcium-dependent hydrolysis of the 2-acyl groups in 3-sn-phosphoglycerides. The chain is Phospholipase A2 nigroviriditoxin basic subunit B from Bothriechis nigroviridis (Black-speckled palm pit viper).